The chain runs to 1067 residues: Lon protease homolog, mitochondrial (1067 aa).

The N-terminal 36 residues, 1–36 (MITRLSGACLRRSGAKRNWPREHLVHRSLLASFSTT), are a transit peptide targeting the mitochondrion. Over residues 55-82 (KSKEPKDNKPLDNKNDPKKTHNEDESHT) the composition is skewed to basic and acidic residues. 2 disordered regions span residues 55–142 (KSKE…MPLN) and 262–314 (IPPK…ESTP). Over residues 128–139 (FELGGEENEDEM) the composition is skewed to acidic residues. The Lon N-terminal domain occupies 162–425 (LLALPIARRP…KALYVLKKEL (264 aa)). A compositionally biased stretch (basic and acidic residues) spans 293-311 (VKSDLKQDNGKEEPEKEVE). Residue 578 to 585 (GPPGVGKT) participates in ATP binding. Residues 791-820 (NSKEKSTGKSGKKTSPQSSEDAANKEASSV) form a disordered region. Positions 854 to 1040 (TTPPGVVMGL…DDVFKRVFSN (187 aa)) constitute a Lon proteolytic domain. Catalysis depends on residues Ser-946 and Lys-989.

It belongs to the peptidase S16 family. As to quaternary structure, homohexamer or homoheptamer. Organized in a ring with a central cavity.

Its subcellular location is the mitochondrion matrix. It carries out the reaction Hydrolysis of proteins in presence of ATP.. ATP-dependent serine protease that mediates the selective degradation of misfolded, unassembled or oxidatively damaged polypeptides as well as certain short-lived regulatory proteins in the mitochondrial matrix. May also have a chaperone function in the assembly of inner membrane protein complexes. Participates in the regulation of mitochondrial gene expression and in the maintenance of the integrity of the mitochondrial genome. Binds to mitochondrial DNA in a site-specific manner. This is Lon protease homolog, mitochondrial (pim1) from Schizosaccharomyces pombe (strain 972 / ATCC 24843) (Fission yeast).